A 687-amino-acid polypeptide reads, in one-letter code: Adhesion G-protein coupled receptor G1 (687 aa).

Positions Met-1–Ser-25 are cleaved as a signal peptide. Gly-26 to Arg-33 contacts heparin. At Gly-26–Tyr-402 the chain is on the extracellular side. Intrachain disulfides connect Cys-35–Cys-91 and Cys-121–Cys-177. Asn-39, Asn-148, and Asn-171 each carry an N-linked (GlcNAc...) asparagine glycan. Heparin is bound at residue Leu-190–Pro-200. Residues Asp-224–Val-395 enclose the GAIN-B domain. Residues Asn-234, Asn-303, Asn-324, and Asn-341 are each glycosylated (N-linked (GlcNAc...) asparagine). 2 cysteine pairs are disulfide-bonded: Cys-346–Cys-377 and Cys-366–Cys-379. The segment at Cys-346–Val-395 is GPS. The tract at residues Tyr-384–Ala-397 is stachel. The helical transmembrane segment at Leu-403–Ala-423 threads the bilayer. Residues Ala-424–Asn-442 lie on the Cytoplasmic side of the membrane. Residues Leu-443–Thr-463 traverse the membrane as a helical segment. At Gly-464–Thr-471 the chain is on the extracellular side. A helical transmembrane segment spans residues Ser-472 to Tyr-492. At Asn-493 to Lys-512 the chain is on the cytoplasmic side. The chain crosses the membrane as a helical span at residues Leu-513–Val-533. Residues Asn-534–Gly-570 are Extracellular-facing. A helical transmembrane segment spans residues Leu-571–Leu-591. The Cytoplasmic segment spans residues Arg-592–Val-603. The chain crosses the membrane as a helical span at residues Leu-604–Phe-624. Residues Ala-625 to Gln-630 lie on the Extracellular side of the membrane. Residues Leu-631–Trp-651 form a helical membrane-spanning segment. The Cytoplasmic segment spans residues Tyr-652 to Ile-687. The tract at residues Ser-664–Ile-687 is disordered. A compositionally biased stretch (low complexity) spans Ser-678–Ile-687.

It belongs to the G-protein coupled receptor 2 family. LN-TM7 subfamily. As to quaternary structure, heterodimer of 2 chains generated by proteolytic processing; the large extracellular N-terminal fragment (ADGRG1 NT) and the membrane-bound C-terminal fragment (ADGRG1-CT) predominantly remain associated and non-covalently linked. ADGRG1 NT self-associates in a trans-trans manner; the homophilic interaction enhances receptor signaling. Interacts with TGM2. Interacts with heparin; leading to the reduction of ADGRG1 shedding. Interacts with COL3A1. Part of a GPCR-tetraspanin complex at least consisting of ADGRG1, CD81, eventually CD9, and GNA11 in which CD81 is enhancing the association of ADGRG1 with GNA11. Autoproteolytically cleaved into 2 fragments; the large extracellular N-terminal fragment and the membroune-bound C-terminal fragment predominantly remain associated and non-covalently linked. In terms of processing, N-glycosylated. The secreted ADGRG1 N-terminal fragment is heavily glycosylated. Post-translationally, ubiquitinated. Undergoes polyubiquitination upon activation. In terms of tissue distribution, expressed in neural progenitor cells in fetal forbrain. Expressed in migrating neurons. Expressed in radial glial endfeet (at protein level). Expressed in peritubular myoid cells, Sertoli cells, and germ cells of the testis.

The protein resides in the cell membrane. Its subcellular location is the secreted. It localises to the membrane raft. Its activity is regulated as follows. Forms a heterodimer of 2 chains generated by proteolytic processing that remain associated through non-covalent interactions mediated by the GAIN-B domain. In the inactivated receptor, the Stachel sequence (also named stalk) is embedded in the GAIN-B domain, where it adopts a beta-strand conformation. On activation, the Stachel moves into the 7 transmembrane region and adopts a twisted hook-shaped configuration that forms contacts within the receptor, leading to coupling of a G-alpha protein, which activates signaling. The cleaved GAIN-B and N-terminal domains can then dissociate from the rest of the receptor. Activated by the small-molecule agonist, 3-alpha-acetoxydihydrodeoxygedunin (3-alpha-DOG). Functionally, adhesion G-protein coupled receptor (aGPCR) for steroid hormone 17alpha-hydroxypregnenolone (17-OH), which is involved in cell adhesion and cell-cell interactions. Ligand binding causes a conformation change that triggers signaling via guanine nucleotide-binding proteins (G proteins) and modulates the activity of downstream effectors, such as RhoA pathway. ADGRG1 is coupled to G(12) and/or G(13) G proteins (GNA12 and GNA13, respectively) and mediates the activation Rho small GTPases. Acts as a potent suppressor of ferroptosis: binding to 17-OH-binding initiates signaling that down-regulates CD36 and alleviates ferroptosis-induced liver injury. Ligand-binding also induces cell adhesion activity via association with proteins such as collagen III/COL3A1 and TGM2. Mediates cell matrix adhesion in developing neurons and hematopoietic stem cells. Involved in cortical development, specifically in maintenance of the pial basement membrane integrity and in cortical lamination: association with COL3A1 in the developing brain inhibits neuronal migration via activation of the RhoA pathway. Together with TGM2, acts as a regulator of myelination and myelin repair in oligodendrocyte precursor cells. Acts as a hemostatic sensor of shear force: G protein-coupled receptor signaling is activated in response to shear force in platelets, promoting G(13) G protein signaling, and platelet shape change and aggregation in a COL3A1-dependent manner. Acts as an inhibitor of VEGFA production thereby inhibiting angiogenesis through a signaling pathway mediated by PRKCA. Plays a role in the maintenance of hematopoietic stem cells in bone marrow niche. Plays an essential role in testis development. Adhesion G-protein coupled receptor (aGPCR) for phosphatidylserine, which is involved in microglia-mediated synapse pruning during development. Required to maintain appropriate synaptic numbers in several brain regions in a time- and circuit-dependent fashion: phosphatidylserine-binding acts as a 'eat-me' signal for apoptotic cells, leading to microglial engulfment of phosphatidylserine-positive synapses. In Mus musculus (Mouse), this protein is Adhesion G-protein coupled receptor G1.